Reading from the N-terminus, the 84-residue chain is Cell division topological specificity factor (84 aa).

This sequence belongs to the MinE family.

Its function is as follows. Prevents the cell division inhibition by proteins MinC and MinD at internal division sites while permitting inhibition at polar sites. This ensures cell division at the proper site by restricting the formation of a division septum at the midpoint of the long axis of the cell. This is Cell division topological specificity factor from Pseudomonas putida (strain ATCC 700007 / DSM 6899 / JCM 31910 / BCRC 17059 / LMG 24140 / F1).